The primary structure comprises 224 residues: Cytidylate kinase (224 aa).

An ATP-binding site is contributed by 12–20 (GPSGAGKGT).

The protein belongs to the cytidylate kinase family. Type 1 subfamily.

The protein localises to the cytoplasm. It carries out the reaction CMP + ATP = CDP + ADP. The enzyme catalyses dCMP + ATP = dCDP + ADP. The chain is Cytidylate kinase from Aliivibrio salmonicida (strain LFI1238) (Vibrio salmonicida (strain LFI1238)).